The following is an 885-amino-acid chain: DNA polymerase eta (885 aa).

The UmuC domain occupies 18 to 274; sequence VLLVDMDCFF…LPVGKIKGLG (257 aa). Residues Asp-22 and Met-23 each coordinate Mg(2+). Residues Asp-22 and Met-23 each coordinate Mn(2+). Arg-70 is an a 2'-deoxyribonucleoside 5'-triphosphate binding site. Mg(2+) is bound by residues Asp-125 and Glu-126. Asp-125 and Glu-126 together coordinate Mn(2+). The active site involves Glu-126. Disordered regions lie at residues 599 to 653 and 658 to 677; these read AIEA…DLYV and VPPTLTEDELKPSTSKRKFD. Residues 608–618 are compositionally biased toward acidic residues; the sequence is FEEDTEEETEL. The segment covering 628 to 649 has biased composition (polar residues); it reads EGQSSDAGQEQDPNTLNDSTGN. The segment at 701–737 adopts a UBZ3-type 1 zinc-finger fold; that stretch reads DILPTIKCDQCGANIPDEVKSLQTHRDHHFAQELSRT. 4 residues coordinate Zn(2+): Cys-708, Cys-711, His-725, and His-729. Residues 722-783 form a disordered region; that stretch reads LQTHRDHHFA…YSTAPPSNSI (62 aa). Positions 739-748 are enriched in basic and acidic residues; it reads RSTEREERTQ. Positions 766–780 are enriched in low complexity; the sequence is TAGSGSSSYSTAPPS. The UBZ3-type 2 zinc-finger motif lies at 798–832; that stretch reads SDPQMNQCPECKAFIKCVDMPEHLDYHVARNLQRE. The Zn(2+) site is built by Cys-805, Cys-808, His-820, and His-824. Residues 846 to 870 are disordered; it reads NKEKISPVQPKKQSQKKLNSTISAS.

It belongs to the DNA polymerase type-Y family. As to quaternary structure, interacts (via C-terminus) with nopo. Mg(2+) serves as cofactor. Mn(2+) is required as a cofactor. Ubiquitination enhanced by nopo. As to expression, expressed in ovaries and testes.

The protein localises to the nucleus. It catalyses the reaction DNA(n) + a 2'-deoxyribonucleoside 5'-triphosphate = DNA(n+1) + diphosphate. The enzyme in complex with the DNA substrate binds a third divalent metal cation. This binding is essential for catalyzing the DNA synthesis. Functionally, DNA polymerase specifically involved in the DNA repair by translesion synthesis (TLS). Plays an important role in translesion synthesis, where the normal high-fidelity DNA polymerases cannot proceed and DNA synthesis stalls. Inserts one or 2 nucleotide(s) opposite the lesion. During homologous recombination (HR) repair, has a overlapping role with the error-prone translesion polymerase PolZ1/DNApol-zeta to initiate repair synthesis that is completed by end joining or another polymerase that can bind and reinitiate synthesis. Particularly important for the repair of UV-induced pyrimidine dimers and for hydroxyurea (HU)-induced DNA damage. Although inserts the correct base, may cause base transitions and transversions depending upon the context. Forms a Schiff base with 5'-deoxyribose phosphate at abasic sites, but does not have any lyase activity, preventing the release of the 5'-deoxyribose phosphate (5'-dRP) residue. This covalent trapping of the enzyme by the 5'-dRP residue inhibits its DNA synthetic activity during base excision repair, thereby avoiding high incidence of mutagenesis. The polypeptide is DNA polymerase eta (Drosophila melanogaster (Fruit fly)).